A 338-amino-acid polypeptide reads, in one-letter code: Holliday junction branch migration complex subunit RuvB (338 aa).

The tract at residues 1–180 is large ATPase domain (RuvB-L); the sequence is MERLLDNKFS…FGIIERLDYY (180 aa). ATP is bound by residues Leu19, Arg20, Gly61, Lys64, Thr65, Thr66, Arg170, Tyr180, and Arg217. Thr65 contacts Mg(2+). A small ATPAse domain (RuvB-S) region spans residues 181–251; sequence TVEELSQIVM…VAKSGLEMFE (71 aa). The tract at residues 254–338 is head domain (RuvB-H); the sequence is EYGLDLVDRN…FNVKESGDKR (85 aa). Residues Lys309 and Arg314 each contribute to the DNA site.

It belongs to the RuvB family. Homohexamer. Forms an RuvA(8)-RuvB(12)-Holliday junction (HJ) complex. HJ DNA is sandwiched between 2 RuvA tetramers; dsDNA enters through RuvA and exits via RuvB. An RuvB hexamer assembles on each DNA strand where it exits the tetramer. Each RuvB hexamer is contacted by two RuvA subunits (via domain III) on 2 adjacent RuvB subunits; this complex drives branch migration. In the full resolvosome a probable DNA-RuvA(4)-RuvB(12)-RuvC(2) complex forms which resolves the HJ.

Its subcellular location is the cytoplasm. It carries out the reaction ATP + H2O = ADP + phosphate + H(+). In terms of biological role, the RuvA-RuvB-RuvC complex processes Holliday junction (HJ) DNA during genetic recombination and DNA repair, while the RuvA-RuvB complex plays an important role in the rescue of blocked DNA replication forks via replication fork reversal (RFR). RuvA specifically binds to HJ cruciform DNA, conferring on it an open structure. The RuvB hexamer acts as an ATP-dependent pump, pulling dsDNA into and through the RuvAB complex. RuvB forms 2 homohexamers on either side of HJ DNA bound by 1 or 2 RuvA tetramers; 4 subunits per hexamer contact DNA at a time. Coordinated motions by a converter formed by DNA-disengaged RuvB subunits stimulates ATP hydrolysis and nucleotide exchange. Immobilization of the converter enables RuvB to convert the ATP-contained energy into a lever motion, pulling 2 nucleotides of DNA out of the RuvA tetramer per ATP hydrolyzed, thus driving DNA branch migration. The RuvB motors rotate together with the DNA substrate, which together with the progressing nucleotide cycle form the mechanistic basis for DNA recombination by continuous HJ branch migration. Branch migration allows RuvC to scan DNA until it finds its consensus sequence, where it cleaves and resolves cruciform DNA. This is Holliday junction branch migration complex subunit RuvB from Caldicellulosiruptor saccharolyticus (strain ATCC 43494 / DSM 8903 / Tp8T 6331).